A 347-amino-acid polypeptide reads, in one-letter code: P2Y purinoceptor 12 (347 aa).

At 1 to 33 (MDVPGVNTTSANTTFSPGTSTLCVRDYKITQVL) the chain is on the extracellular side. 2 N-linked (GlcNAc...) asparagine glycosylation sites follow: Asn-7 and Asn-12. Disulfide bonds link Cys-23–Cys-276 and Cys-103–Cys-181. A helical transmembrane segment spans residues 34–56 (FPLLYTVLFFAGLITNSLAMRIF). Over 57–67 (FQIRSKSNFII) the chain is Cytoplasmic. Residues Ser-61 and Ser-63 each carry the phosphoserine modification. Residues 68–88 (FLKNTVISDLLMILTFPFKIL) traverse the membrane as a helical segment. Over 89–103 (SDAKLGAGPLRTLVC) the chain is Extracellular. The ADP site is built by Arg-99, Cys-103, and Tyr-111. A helical membrane pass occupies residues 104-124 (QVTSVTFYFTMYISISFLGLI). The Cytoplasmic segment spans residues 125–148 (TIDRYLKTTRPFKTSSPSNLLGAK). A helical transmembrane segment spans residues 149 to 168 (ILSVVIWAFMFLISLPNMIL). Residues 162-165 (SLPN), 181-185 (CSFLK), His-193, and Asn-197 contribute to the ADP site. At 169-191 (TNRRPKDKDVTKCSFLKSEFGLV) the chain is on the extracellular side. A helical transmembrane segment spans residues 192-213 (WHEIVNYICQVIFWINFLIVIV). Residues 214 to 239 (CYSLITKELYRSYVRTRGSAKVPKKK) are Cytoplasmic-facing. The chain crosses the membrane as a helical span at residues 240-265 (VNVKVFIIIAVFFICFVPFHFARIPY). Residues 262 to 265 (RIPY), Gln-269, and Lys-286 each bind ADP. The Extracellular segment spans residues 266–284 (TLSQTRAVFDCSAENTLFY). The helical transmembrane segment at 285–304 (VKESTLWLTSLNACLDPFIY) threads the bilayer. Residues 305–347 (FFLCKSFRNSLTSMLRCSNSTSTSGTNKKKGQEGGEPSEETPM) lie on the Cytoplasmic side of the membrane. The disordered stretch occupies residues 321–347 (CSNSTSTSGTNKKKGQEGGEPSEETPM).

This sequence belongs to the G-protein coupled receptor 1 family.

The protein resides in the cell membrane. Its function is as follows. Receptor for ADP and ATP coupled to G-proteins that inhibit the adenylyl cyclase second messenger system. Required for normal platelet aggregation and blood coagulation. The chain is P2Y purinoceptor 12 (P2ry12) from Mus musculus (Mouse).